The following is a 118-amino-acid chain: Small ribosomal subunit protein uS13 (118 aa).

The interval 94 to 118 (SLPVHGQRTKTNARTCKGPRKPIKK) is disordered.

It belongs to the universal ribosomal protein uS13 family. As to quaternary structure, part of the 30S ribosomal subunit. Forms a loose heterodimer with protein S19. Forms two bridges to the 50S subunit in the 70S ribosome.

In terms of biological role, located at the top of the head of the 30S subunit, it contacts several helices of the 16S rRNA. In the 70S ribosome it contacts the 23S rRNA (bridge B1a) and protein L5 of the 50S subunit (bridge B1b), connecting the 2 subunits; these bridges are implicated in subunit movement. Contacts the tRNAs in the A and P-sites. In Buchnera aphidicola subsp. Acyrthosiphon pisum (strain 5A), this protein is Small ribosomal subunit protein uS13.